Here is a 2988-residue protein sequence, read N- to C-terminus: NBPF family member NBPF14 (2988 aa).

A coiled-coil region spans residues 75 to 119 (RQFKEEKLAEQLKQAEELRQYKVLVHSQERELTQLREKLREGRDA). Disordered regions lie at residues 161–200 (KLSP…SKVP), 451–474 (EKVQ…PEDS), and 520–566 (WEDA…EGYS). Residues 165–177 (ENDEDEDEDVQVE) are compositionally biased toward acidic residues. Olduvai domains lie at 165 to 259 (ENDE…NILP), 436 to 528 (ENDN…HIIP), 529 to 600 (ENES…VDIG), 601 to 692 (RHRW…PSCP), 695 to 750 (SREL…LDVD), 751 to 843 (RIKK…RSKK), 844 to 919 (ERRR…LDVD), 920 to 1012 (RIKK…RSKK), 1013 to 1105 (ERRR…PSCP), 1108 to 1163 (SREL…LDVD), 1164 to 1256 (RIKK…RSKK), 1257 to 1349 (ERRR…PSCP), 1352 to 1407 (SREL…LDVD), 1408 to 1500 (RIKK…RSKK), 1501 to 1593 (ERRR…PSCP), 1596 to 1651 (SREL…LDVD), 1652 to 1744 (RFKK…RSKK), 1745 to 1837 (ERRR…PSCP), 1840 to 1895 (SREL…LDVD), 1896 to 1988 (RIKK…RSKK), 1989 to 2081 (ERRR…PSCP), 2084 to 2139 (SREL…LDVD), 2140 to 2232 (RIKK…RSKK), 2233 to 2325 (ERRR…PSCP), 2328 to 2383 (SREL…LDVD), 2384 to 2476 (RIKK…RSKK), 2477 to 2569 (ERRR…PSCP), 2572 to 2627 (SREL…LDVD), 2628 to 2720 (RIKK…RSKK), 2721 to 2813 (ERRR…PSCP), 2816 to 2889 (SREL…RSKK), and 2890 to 2988 (ERRR…IFPQ). The segment covering 190-200 (EVQKAEESKVP) has biased composition (basic and acidic residues). Acidic residues-rich tracts occupy residues 530–539 (NESDDEEEEE) and 550–562 (ESEE…ESWD). 3 disordered regions span residues 754 to 773 (KDEE…SREL), 828 to 871 (EKKG…LDEK), and 999 to 1038 (KGKG…ELLD). Basic residues-rich tracts occupy residues 831–849 (GKGK…RRGR) and 1000–1018 (GKGK…RRGR). A disordered region spans residues 1243-1282 (KGKGKKRRGRRSKKERRRGRKEGEEDQNPPCPRLSRELLD). Residues 1244 to 1262 (GKGKKRRGRRSKKERRRGR) are compositionally biased toward basic residues. The disordered stretch occupies residues 1487-1521 (KGKGKKRRGRRSKKERRRGRKEGEEDQNPPCPRLS). Positions 1488–1506 (GKGKKRRGRRSKKERRRGR) are enriched in basic residues. The segment at 1731 to 1770 (KGKGKKRRGRRSKKERRRGRKEGEEDQNPPCPRLSRELLD) is disordered. Basic residues predominate over residues 1732–1750 (GKGKKRRGRRSKKERRRGR). Residues 1975–2014 (KGKGKKRRGRRSKKERRRGRKEGEEDQNPPCPRLSRELLD) form a disordered region. Residues 1976 to 1994 (GKGKKRRGRRSKKERRRGR) show a composition bias toward basic residues. The tract at residues 2219–2258 (KGKGKKRRGRRSKKERRRGRKEGEEDQNPPCPRLSRELLD) is disordered. Residues 2220–2238 (GKGKKRRGRRSKKERRRGR) show a composition bias toward basic residues. The interval 2463-2502 (KGKGKKRRGRRSKKERRRGRKEGEEDQNPPCPRLSRELLD) is disordered. The span at 2464 to 2482 (GKGKKRRGRRSKKERRRGR) shows a compositional bias: basic residues. Disordered regions lie at residues 2707–2745 (KGKG…RELL) and 2877–2909 (GKGK…CPRL). Composition is skewed to basic residues over residues 2708-2726 (GKGK…RRGR) and 2877-2895 (GKGK…RRGR).

This sequence belongs to the NBPF family. Expressed in spleen and fetal liver.

It localises to the cytoplasm. This is NBPF family member NBPF14 from Homo sapiens (Human).